A 114-amino-acid chain; its full sequence is Large ribosomal subunit protein bL19 (114 aa).

Belongs to the bacterial ribosomal protein bL19 family.

In terms of biological role, this protein is located at the 30S-50S ribosomal subunit interface and may play a role in the structure and function of the aminoacyl-tRNA binding site. This is Large ribosomal subunit protein bL19 (rplS) from Listeria innocua serovar 6a (strain ATCC BAA-680 / CLIP 11262).